A 335-amino-acid polypeptide reads, in one-letter code: Putative peroxisomal biogenesis factor 19 (335 aa).

Disordered regions lie at residues 14–70 (LETQ…LGND) and 104–124 (YNKD…PSEE). Composition is skewed to low complexity over residues 22-55 (PTTT…PSTI) and 109-119 (NNNSDDSNNGG).

This sequence belongs to the peroxin-19 family.

It localises to the peroxisome. This is Putative peroxisomal biogenesis factor 19 (pex19) from Dictyostelium discoideum (Social amoeba).